A 410-amino-acid chain; its full sequence is Succinyl-CoA:(R)-benzylsuccinate CoA-transferase subunit BbsE (410 aa).

Belongs to the CoA-transferase III family. As to quaternary structure, heterotetramer composed of 2 BbsE subunits and 2 BbsF subunits.

It catalyses the reaction (R)-2-benzylsuccinate + succinyl-CoA = (R)-2-benzylsuccinyl-CoA + succinate. It participates in xenobiotic degradation; toluene degradation. With respect to regulation, inhibited by (S)-benzylsuccinyl-CoA. Its function is as follows. Catalyzes the reversible conversion of (R)-2-benzylsuccinate to (R)-2-benzylsuccinyl-CoA. Inactive with (S)-benzylsuccinate. In Thauera aromatica, this protein is Succinyl-CoA:(R)-benzylsuccinate CoA-transferase subunit BbsE (bbsE).